Here is a 227-residue protein sequence, read N- to C-terminus: MQLVFIRHGLSEWNALNLFTGWRDVNLSEKGVEEAKEAGRKLKAAGFEFDIAFTSVLTRAIKTCNLVLEESDQLWVPQIKTWRLNERHYGGLQGLNKAEAAAEHGDEQVRIWRRSYDVLPPVLDPKDPNSAHNDRRYAHLPADVVPDCENLKVTLDRVLPFWEDQIAPAIKAGKRVLVAAHGNSLRALAKHIEGISDEDIMGLEIPTGQPLVYELDDNLKVLSKRYL.

Substrate-binding positions include 7–14 (RHGLSEWN), 20–21 (TG), Arg59, 86–89 (ERHY), Lys97, 113–114 (RR), and 182–183 (GN). His8 (tele-phosphohistidine intermediate) is an active-site residue. Glu86 (proton donor/acceptor) is an active-site residue.

The protein belongs to the phosphoglycerate mutase family. BPG-dependent PGAM subfamily. In terms of assembly, homodimer.

The catalysed reaction is (2R)-2-phosphoglycerate = (2R)-3-phosphoglycerate. It functions in the pathway carbohydrate degradation; glycolysis; pyruvate from D-glyceraldehyde 3-phosphate: step 3/5. Its function is as follows. Catalyzes the interconversion of 2-phosphoglycerate and 3-phosphoglycerate. This Actinobacillus succinogenes (strain ATCC 55618 / DSM 22257 / CCUG 43843 / 130Z) protein is 2,3-bisphosphoglycerate-dependent phosphoglycerate mutase.